The primary structure comprises 334 residues: Large ribosomal subunit protein uL3 (334 aa).

Positions 1 to 10 (MGMKKNRPRR) are enriched in basic residues. Positions 1-21 (MGMKKNRPRRGSLAFSPRKRA) are disordered.

The protein belongs to the universal ribosomal protein uL3 family. Part of the 50S ribosomal subunit. Forms a cluster with proteins L14 and L24e.

Its function is as follows. One of the primary rRNA binding proteins, it binds directly near the 3'-end of the 23S rRNA, where it nucleates assembly of the 50S subunit. In Methanococcus vannielii (strain ATCC 35089 / DSM 1224 / JCM 13029 / OCM 148 / SB), this protein is Large ribosomal subunit protein uL3.